The sequence spans 600 residues: Proline--tRNA ligase (600 aa).

It belongs to the class-II aminoacyl-tRNA synthetase family. ProS type 1 subfamily. As to quaternary structure, homodimer.

Its subcellular location is the cytoplasm. It catalyses the reaction tRNA(Pro) + L-proline + ATP = L-prolyl-tRNA(Pro) + AMP + diphosphate. Its function is as follows. Catalyzes the attachment of proline to tRNA(Pro) in a two-step reaction: proline is first activated by ATP to form Pro-AMP and then transferred to the acceptor end of tRNA(Pro). As ProRS can inadvertently accommodate and process non-cognate amino acids such as alanine and cysteine, to avoid such errors it has two additional distinct editing activities against alanine. One activity is designated as 'pretransfer' editing and involves the tRNA(Pro)-independent hydrolysis of activated Ala-AMP. The other activity is designated 'posttransfer' editing and involves deacylation of mischarged Ala-tRNA(Pro). The misacylated Cys-tRNA(Pro) is not edited by ProRS. The sequence is that of Proline--tRNA ligase from Prochlorococcus marinus (strain MIT 9312).